The primary structure comprises 198 residues: MAGVEKIKERILEEARAQAEANIKRAEEEAAKIIEEAQKEAAAKKAQILEKAKQEAVDVKKRLKAMAELEARKKKLQARQEVVDEAFNKTIEKLNSLPDREYEEIISQMIVNSVESGSEEIILSPKDKQRISPGFIENINKKLSQKGIDGKIKLSEETKNISGGFILKSGDIEINNSFEAIIRMKREEVEAEVIKALF.

The protein belongs to the V-ATPase E subunit family.

In terms of biological role, produces ATP from ADP in the presence of a proton gradient across the membrane. In Acetivibrio thermocellus (strain ATCC 27405 / DSM 1237 / JCM 9322 / NBRC 103400 / NCIMB 10682 / NRRL B-4536 / VPI 7372) (Clostridium thermocellum), this protein is V-type ATP synthase subunit E.